The sequence spans 105 residues: uncharacterized protein (105 aa).

Residues 81–105 are disordered; it reads NNNNKTITVDNNNNNNNNNNNNNNK.

This is an uncharacterized protein from Dictyostelium discoideum (Social amoeba).